A 239-amino-acid polypeptide reads, in one-letter code: Peptidyl-tRNA hydrolase (239 aa).

A tRNA-binding site is contributed by Tyr-14. His-19 functions as the Proton acceptor in the catalytic mechanism. Residues Phe-64, Asn-66, and Asn-112 each contribute to the tRNA site. The tract at residues 186-239 (RTAPPRPSTGTGRPPAKTPARAEEPPAPAASPAPATAPLPDARSPLQKLVDRFK) is disordered. The span at 193–204 (STGTGRPPAKTP) shows a compositional bias: low complexity. Residues 210 to 222 (PPAPAASPAPATA) are compositionally biased toward pro residues.

Belongs to the PTH family. In terms of assembly, monomer.

It is found in the cytoplasm. The catalysed reaction is an N-acyl-L-alpha-aminoacyl-tRNA + H2O = an N-acyl-L-amino acid + a tRNA + H(+). Its function is as follows. Hydrolyzes ribosome-free peptidyl-tRNAs (with 1 or more amino acids incorporated), which drop off the ribosome during protein synthesis, or as a result of ribosome stalling. Functionally, catalyzes the release of premature peptidyl moieties from peptidyl-tRNA molecules trapped in stalled 50S ribosomal subunits, and thus maintains levels of free tRNAs and 50S ribosomes. The chain is Peptidyl-tRNA hydrolase from Ruegeria pomeroyi (strain ATCC 700808 / DSM 15171 / DSS-3) (Silicibacter pomeroyi).